Consider the following 271-residue polypeptide: Pyrroline-5-carboxylate reductase (271 aa).

The protein belongs to the pyrroline-5-carboxylate reductase family.

It is found in the cytoplasm. It carries out the reaction L-proline + NADP(+) = (S)-1-pyrroline-5-carboxylate + NADPH + 2 H(+). The enzyme catalyses L-proline + NAD(+) = (S)-1-pyrroline-5-carboxylate + NADH + 2 H(+). It participates in amino-acid biosynthesis; L-proline biosynthesis; L-proline from L-glutamate 5-semialdehyde: step 1/1. In terms of biological role, catalyzes the reduction of 1-pyrroline-5-carboxylate (PCA) to L-proline. The chain is Pyrroline-5-carboxylate reductase from Staphylococcus haemolyticus (strain JCSC1435).